The primary structure comprises 134 residues: Small ribosomal subunit protein uS9 (134 aa).

Residues 109-134 (DARRTEPHKPSKSSKGPRAKRQKSYR) form a disordered region. Positions 118 to 134 (PSKSSKGPRAKRQKSYR) are enriched in basic residues.

This sequence belongs to the universal ribosomal protein uS9 family.

The sequence is that of Small ribosomal subunit protein uS9 from Methanococcus maripaludis (strain DSM 14266 / JCM 13030 / NBRC 101832 / S2 / LL).